The chain runs to 110 residues: Protein YcgL (110 aa).

Positions 14 to 98 (MFCVIYRSSK…PPEDLLKQHL (85 aa)) constitute a YcgL domain.

This chain is Protein YcgL, found in Salmonella arizonae (strain ATCC BAA-731 / CDC346-86 / RSK2980).